The primary structure comprises 392 residues: Bifunctional enzyme Fae/Hps (392 aa).

Residues 1-161 (MFQIGEALMG…EESNKSTHAI (161 aa)) are formaldehyde-activating enzyme. Catalysis depends on His-17, which acts as the Proton donor. Residues Asp-19, Leu-48, Lys-66, Thr-68, and Gln-83 each contribute to the substrate site. Residues 162–392 (MGFKVTRLWD…IDQFRVMTDF (231 aa)) form a 3-hexulose-6-phosphate synthase region.

This sequence in the N-terminal section; belongs to the formaldehyde-activating enzyme family. In the C-terminal section; belongs to the HPS/KGPDC family. HPS subfamily.

The enzyme catalyses 5,6,7,8-tetrahydromethanopterin + formaldehyde = 5,10-methylenetetrahydromethanopterin + H2O. It catalyses the reaction D-ribulose 5-phosphate + formaldehyde = D-arabino-hex-3-ulose 6-phosphate. It functions in the pathway carbohydrate biosynthesis; D-ribose 5-phosphate biosynthesis. Functionally, catalyzes the condensation of formaldehyde with tetrahydromethanopterin (H(4)MPT) to 5,10-methylenetetrahydromethanopterin. Its function is as follows. Catalyzes the reversible formation of ribulose-5-phosphate and formaldehyde from 3-hexulose-6-phosphate. The chain is Bifunctional enzyme Fae/Hps from Methanosarcina barkeri (strain Fusaro / DSM 804).